Consider the following 580-residue polypeptide: Bifunctional lycopene cyclase/phytoene synthase (580 aa).

The next 3 helical transmembrane spans lie at 3–23, 35–55, and 65–85; these read WEYA…LAAV, KLVF…SYLI, and GVVV…FFVI. Asn-89 carries N-linked (GlcNAc...) asparagine glycosylation. 4 consecutive transmembrane segments (helical) span residues 116-136, 139-159, 171-191, and 214-234; these read IAGQ…VSSG, GMYM…LWSI, NTAL…TFAL, and IEEA…LIAC.

The protein in the N-terminal section; belongs to the lycopene beta-cyclase family. It in the C-terminal section; belongs to the phytoene/squalene synthase family.

It is found in the membrane. The enzyme catalyses all-trans-lycopene = gamma-carotene. The catalysed reaction is gamma-carotene = all-trans-beta-carotene. It catalyses the reaction 2 (2E,6E,10E)-geranylgeranyl diphosphate = 15-cis-phytoene + 2 diphosphate. Its pathway is carotenoid biosynthesis; beta-carotene biosynthesis. The protein operates within carotenoid biosynthesis; phytoene biosynthesis; all-trans-phytoene from geranylgeranyl diphosphate: step 1/1. Its function is as follows. Bifunctional enzyme; part of the car gene cluster that mediates the biosynthesis of neurosporaxanthin, a carboxylic apocarotenoid acting as an essential protective pigments and leading to orange pigmentation. CarAR catalyzes the first step of the pathway by converting geranylgeranyl diphosphate to phytoene, as well as the later cyclization step that transforms the carB product lycopene into gamma-carotene. CarAR also converts part of gamma-carotene into beta-carotene. Neurosporaxanthin is synthesized from geranyl-geranyl pyrophosphate (GGPP) through several enzymatic activities. Phytoene synthase activity performed by the bifunctional enzyme carAR first produces phytoene from geranyl-geranyl pyrophosphate (GGPP). The phytoene dehydrogenase carB then introduces 4 desaturations to lead to lycopene which is substrate of the carotene cyclase activity of carAR that leads to the production of gamma-carotene. CarB then performs a 5th desaturation reaction to yield torulene. Torulene is the substrate of the dioxidase carT that breaks the molecule, removing five carbon atoms to yield beta-apo-4'-carotenal, whereas the aldehyde dehydrogenase carD mediates the last step by converting beta-apo-4'-carotenal into neurosporaxanthin. In Gibberella fujikuroi (strain CBS 195.34 / IMI 58289 / NRRL A-6831) (Bakanae and foot rot disease fungus), this protein is Bifunctional lycopene cyclase/phytoene synthase.